A 90-amino-acid chain; its full sequence is uncharacterized protein (90 aa).

A signal peptide spans 1 to 20 (MAYKMLQVVLCSTLLIGALG).

This is an uncharacterized protein from Homo sapiens (Human).